The following is a 445-amino-acid chain: uncharacterized protein (445 aa).

Helical transmembrane passes span 16 to 36 (IVSL…AFLI), 52 to 72 (LLAS…GYLL), 98 to 118 (VHSL…AGGC), 168 to 188 (GLMF…LGIV), 219 to 239 (ASAL…VWLI), 243 to 263 (GWSV…GALG), 283 to 303 (LIAA…NEGS), and 366 to 386 (AAYP…VPLV). A disordered region spans residues 417–445 (AWPNGPRRPGPPGQPRRVRQGGTAITPPT).

It belongs to the major facilitator superfamily.

It is found in the cell membrane. This is an uncharacterized protein from Mycobacterium tuberculosis (strain ATCC 25618 / H37Rv).